The sequence spans 2326 residues: Nonribosomal peptide synthetase inpB (2326 aa).

The Carrier 1 domain occupies 8–84 (SPSEWLQLEL…SLYSMAQGPA (77 aa)). Position 45 is an O-(pantetheine 4'-phosphoryl)serine (Ser45). Residues 87–121 (ASSSTSDNASDKDSSLDDSETGALTPTTDAGSSLA) form a disordered region. The segment covering 108 to 121 (GALTPTTDAGSSLA) has biased composition (polar residues). The tract at residues 144–568 (QAVVPCSAIQ…LLSPGEVSQL (425 aa)) is condensation 1. The interval 593–997 (LQPGAAAVNS…GRRDTQVKIR (405 aa)) is adenylation 1. The 77-residue stretch at 1145–1221 (EPSTETEFKL…DLARAVESRV (77 aa)) folds into the Carrier 2 domain. Ser1182 bears the O-(pantetheine 4'-phosphoryl)serine mark. A disordered region spans residues 1226-1247 (DEEDPAPFSVWRESRGSEPSEE). Positions 1266–1680 (EDVLPCTALQ…LLSPEDVNQL (415 aa)) are condensation 2. Residues 1702 to 2097 (EVARSRPGAA…GRIDTQIKIR (396 aa)) form an adenylation 2 region. In terms of domain architecture, Carrier 3 spans 2216–2294 (PPSTEMEKAL…DLAVLLEKRP (79 aa)). Position 2253 is an O-(pantetheine 4'-phosphoryl)serine (Ser2253).

The protein belongs to the NRP synthetase family.

It functions in the pathway secondary metabolite biosynthesis. In terms of biological role, nonribosomal peptide synthetase; part of the inp gene cluster that mediates the biosynthesis of fellutamide B, a mycotoxin that acts as a proteasome inhibitor. In the first step of fellutabmide B biosynthesis inpC activates 3-hydroxydodecanoic acid to generate 3-hydroxydodecanoyl-AMP that is then loaded onto the T0 domain of inpB. The 3-hydroxydodecanoyl-S-phosphopantetheinyl-T0 is sequentially extended with L-Asn and L-Gln by the two CAT modules of inpB. The linear lipodipeptide from inpB is then transferred onto inpA for the addition of the third amino acid, L-Leu. Reductive releasing of the lipotripeptide by the TE domain of inpA produces (2S)-fellutamide B. InpF might be involved in the release and transfer of the lipodipeptide from inpB to inpA. The inp cluster-encoded proteasome subunit inpE confers resistance to internally produced fellutamides. The MFS efflux transporter inpD may contribute to fellutamide resistance as well. The chain is Nonribosomal peptide synthetase inpB from Emericella nidulans (strain FGSC A4 / ATCC 38163 / CBS 112.46 / NRRL 194 / M139) (Aspergillus nidulans).